An 868-amino-acid polypeptide reads, in one-letter code: Receptor-like protein 32 (868 aa).

An N-terminal signal peptide occupies residues 1–32; it reads MKDSWNSTSIIPFTFSSLIFFLFTFDFQDVFG. The Extracellular portion of the chain corresponds to 33-815; sequence VPTKHLCRLE…PPELEEEDRE (783 aa). Residues asparagine 73, asparagine 109, asparagine 141, and asparagine 165 are each glycosylated (N-linked (GlcNAc...) asparagine). LRR repeat units follow at residues 118 to 142, 143 to 166, 168 to 188, 189 to 213, 214 to 237, 239 to 261, 262 to 285, 287 to 310, 312 to 334, 335 to 360, 362 to 385, 389 to 412, 413 to 436, 438 to 459, 465 to 489, 490 to 515, 517 to 538, 540 to 560, 561 to 586, 588 to 606, 607 to 630, 675 to 699, 700 to 723, 724 to 747, and 749 to 772; these read LRFLTTLDLSYNYFSGQIPSCIENF, SHLTTLDLSKNYFSGGIPSSIGNL, QLTFLDLSGNEFVGEMPFFGN, MNQLTNLYVDSNDLTGIFPLSLLNL, KHLSDLSLSRNQFTGTLPSNMSSL, NLEYFEAWGNAFTGTLPSSLFTI, ASLTSINLRNNQLNGTLEFGNISS, STLTVLDISNNNFIGPIPKSISKF, NLQDLDLSHLNTQGPVDFSIFTN, LKSLQLLNLSHLNTTTTIDLNALFSS, LNSIYSMDLSGNHVSATTKISVAD, TQLISQLYLSGCGITEFPELLRSQ, HKMTNLDISNNKIKGQVPGWLWTL, KLIFVDLSNNIFTGFERSTEHG, KPSMQYLVGSNNNFTGKIPSFICAL, RSLITLDLSDNNLNGSIPPCMGNLKS, LSFLNLRQNRLGGGLPRSIFKS, RSLDVGHNQLVGKLPRSFIRL, SALEVLNVENNRINDTFPFWLSSLKK, QVLVLRSNAFHGPIHHASF, HTLRIINLSHNQFSGTLPANYFVN, LKIYTALDFSENKLEGEIPRSIGLL, KELHVLNLSSNAFTGHIPSSMGNL, RELESLDVSQNKLSGEIPQELGNL, and YLAYMNFSHNQLGGLVPGGTQFRR. N-linked (GlcNAc...) asparagine glycosylation occurs at asparagine 233. N-linked (GlcNAc...) asparagine glycosylation is found at asparagine 275 and asparagine 282. Asparagine 342 and asparagine 347 each carry an N-linked (GlcNAc...) asparagine glycan. Residues asparagine 477 and asparagine 503 are each glycosylated (N-linked (GlcNAc...) asparagine). An N-linked (GlcNAc...) asparagine glycan is attached at asparagine 574. Asparagine 613 is a glycosylation site (N-linked (GlcNAc...) asparagine). Residues asparagine 706, asparagine 746, asparagine 754, and asparagine 774 are each glycosylated (N-linked (GlcNAc...) asparagine). Residues 816–836 form a helical membrane-spanning segment; that stretch reads VFSWIAAAIGFGPGIAFGLTI. Residues 837-868 lie on the Cytoplasmic side of the membrane; that stretch reads RYILVFYKPDWFMHTFGHLQPSAHEKRLRRKQ.

This sequence belongs to the RLP family.

The protein localises to the cell membrane. The sequence is that of Receptor-like protein 32 from Arabidopsis thaliana (Mouse-ear cress).